The primary structure comprises 367 residues: Carbamoyl-phosphate synthase (367 aa).

One can recognise an ATP-grasp domain in the interval 111–296 (KEFYNEIGVP…SLCELVNMAA (186 aa)). ATP is bound at residue 137-186 (KMEFPVVLKQGQGQGGKDIKVAESLDDVKEYFEEFDHALCEKFIEGSEIS). Mg(2+) is bound by residues aspartate 253, glutamate 267, and asparagine 269. 3 residues coordinate Mn(2+): aspartate 253, glutamate 267, and asparagine 269.

This sequence belongs to the small carbamoyl-phosphate synthase family. Forms homodimers and homotetramers (dimers of dimers). Mg(2+) is required as a cofactor. It depends on Mn(2+) as a cofactor.

The catalysed reaction is hydrogencarbonate + NH4(+) + 2 ATP = carbamoyl phosphate + 2 ADP + phosphate + 2 H(+). Its function is as follows. Catalyzes the synthesis of carbamoyl phosphate from ATP, ammonium and bicarbonate. Proceeds via a three-step mechanism, i.e. the phosphorylation of hydrogencarbonate to carboxyphosphate, a nucleophilic attack of ammonia on carboxyphosphate yielding carbamate, and the phosphorylation of carbamate forming carbamoyl phosphate. In M.smithii, the predominant archaeon in the human gut, one function of this enzyme may be to sequester ammonia, a scarce nutrient in the intestine which is the major source of nitrogen in M.smithii for the biosynthesis of nucleotides, amino acids, and many other metabolites. The chain is Carbamoyl-phosphate synthase from Methanobrevibacter smithii (strain ATCC 35061 / DSM 861 / OCM 144 / PS).